The sequence spans 541 residues: Ankyrin repeat domain-containing protein 13C (541 aa).

The segment covering 1 to 20 (MTGEKIRSLRRDHKPSKEDG) has biased composition (basic and acidic residues). Residues 1-53 (MTGEKIRSLRRDHKPSKEDGDVLEPCEEEATAALGGAFTGGRSGPGGSGKGGK) form a disordered region. The span at 21 to 30 (DVLEPCEEEA) shows a compositional bias: acidic residues. Residues 37–52 (AFTGGRSGPGGSGKGG) are compositionally biased toward gly residues. 3 ANK repeats span residues 111-142 (PSLY…QKDN), 143-172 (HGNT…PVKV), and 176-205 (QGWS…QQSR). Phosphoserine is present on Ser411.

The protein localises to the endoplasmic reticulum membrane. Functionally, acts as a molecular chaperone for G protein-coupled receptors, regulating their biogenesis and exit from the ER. The protein is Ankyrin repeat domain-containing protein 13C (Ankrd13c) of Mus musculus (Mouse).